Consider the following 395-residue polypeptide: Flagellin B (395 aa).

This sequence belongs to the bacterial flagellin family.

The protein localises to the secreted. It is found in the bacterial flagellum. In terms of biological role, flagellin is the subunit protein which polymerizes to form the filaments of bacterial flagella. The protein is Flagellin B (flaB) of Rhizobium meliloti (Ensifer meliloti).